The sequence spans 364 residues: Beta-parvin (364 aa).

A disordered region spans residues Met-1–Leu-57. The residue at position 7 (Ser-7) is a Phosphoserine. Over residues Arg-36 to Lys-46 the composition is skewed to basic and acidic residues. At Ser-54 the chain carries Phosphoserine. 2 Calponin-homology (CH) domains span residues Lys-87–Arg-194 and Ser-254–Lys-361.

It belongs to the parvin family. As to quaternary structure, interacts with DYSF. Interacts with ILK, ARHGEF6, PXN (via LD motifs), ACTN2 and actin. As to expression, expressed predominantly in heart and skeletal muscle.

It is found in the cell junction. The protein localises to the focal adhesion. The protein resides in the cell membrane. Its subcellular location is the cytoplasm. It localises to the cytoskeleton. It is found in the cell projection. The protein localises to the lamellipodium. The protein resides in the myofibril. Its subcellular location is the sarcomere. It localises to the z line. Functionally, adapter protein that plays a role in integrin signaling via ILK and in activation of the GTPases CDC42 and RAC1 by guanine exchange factors, such as ARHGEF6. Is involved in the reorganization of the actin cytoskeleton and formation of lamellipodia. Plays a role in cell adhesion, cell spreading, establishment or maintenance of cell polarity, and cell migration. This Homo sapiens (Human) protein is Beta-parvin (PARVB).